Consider the following 354-residue polypeptide: Transcription factor BHLH3 (354 aa).

A disordered region spans residues 124 to 143; the sequence is VAEEETSGDKALLHGGGGSS. Residues 178-191 are basic motif; that stretch reads GTPSKNLMAERRRR. Positions 178–227 constitute a bHLH domain; that stretch reads GTPSKNLMAERRRRKRLNDRLSMLRSIVPKISKMDRTSILGDTIDYVKEL. Positions 192 to 227 are helix-loop-helix motif; the sequence is KRLNDRLSMLRSIVPKISKMDRTSILGDTIDYVKEL.

The protein belongs to the bHLH protein family. In terms of assembly, interacts with LAX1. Post-translationally, phosphorylated by MAPK3 and MAPK6.

It localises to the nucleus. It is found in the cytoplasm. Its function is as follows. Transcription factor involved in defense responses that functions downstream of RAC1 and upstream of PAL1 and WRKY19 genes. This is Transcription factor BHLH3 from Oryza sativa subsp. japonica (Rice).